Here is a 195-residue protein sequence, read N- to C-terminus: Peptidyl-tRNA hydrolase (195 aa).

Tyr-17 lines the tRNA pocket. The active-site Proton acceptor is His-22. Positions 68, 70, and 116 each coordinate tRNA.

The protein belongs to the PTH family. As to quaternary structure, monomer.

The protein localises to the cytoplasm. The enzyme catalyses an N-acyl-L-alpha-aminoacyl-tRNA + H2O = an N-acyl-L-amino acid + a tRNA + H(+). In terms of biological role, hydrolyzes ribosome-free peptidyl-tRNAs (with 1 or more amino acids incorporated), which drop off the ribosome during protein synthesis, or as a result of ribosome stalling. Functionally, catalyzes the release of premature peptidyl moieties from peptidyl-tRNA molecules trapped in stalled 50S ribosomal subunits, and thus maintains levels of free tRNAs and 50S ribosomes. The polypeptide is Peptidyl-tRNA hydrolase (Shewanella frigidimarina (strain NCIMB 400)).